The chain runs to 280 residues: Late embryogenesis abundant protein M17 (280 aa).

The first 22 residues, 1–22, serve as a signal peptide directing secretion; it reads MGNLKSLVLLALLFSFSVAVFA. N-linked (GlcNAc...) asparagine glycosylation is present at Asn23. 2 repeat units span residues 76-97 and 131-152. The 4 X 22 AA repeats, Cys-rich stretch occupies residues 76–262; that stretch reads GGCRWGCCGG…RGRCRYCCRS (187 aa). A disordered region spans residues 163-184; that stretch reads VEPNDVEPQQGGRGGGGGGGGG. Residues 173 to 184 show a composition bias toward gly residues; the sequence is GGRGGGGGGGGG. Repeat unit 3 spans residues 186–207; the sequence is GGCRWGCCGGWWRGRCRYCCRS. The interval 218–239 is disordered; sequence VEPNDVEPQQGGRGGGGGGGGG. The segment covering 228–239 has biased composition (gly residues); the sequence is GGRGGGGGGGGG. Residues 241–262 form repeat 4; that stretch reads GGCRWGCCGGWWRGRCRYCCRS.

Its function is as follows. May be involved in the acquisition of desiccation tolerance during late phase of embryogenesis. The protein is Late embryogenesis abundant protein M17 of Arabidopsis thaliana (Mouse-ear cress).